The following is a 355-amino-acid chain: MNPTTKRAIKEIVVYALAFGCSWYAAHKLLSTLDPYRQKRQDTVSKSRKRLDEWAGEQVKELETLELNEYEQIVASQLVLPSEIDVSFDDIGGMDEHVNQLLQDVLFPLKYPEVFDTHGGLLSCPKGLLLYGPPGCGKTMLAKALAKQSQATFINVSVGLLTDKWFGESNKLVDALFTLARKLEPTIIFIDEIDTFLRQRQRTDHEAMAQIKAEFMSMWDGLLSGQSRVLVLGATNRPADIDEAIRRRMPKVFSIPLPNAEQRRKILELYLKKVPLEANFDWNGVVNATAGLSGSYIKEVCRSALSVPRRELFDKHGNDLEAIKYDIQSGGLRSLKTEDFYHYESLQNVSGIDVE.

132–139 serves as a coordination point for ATP; it reads GPPGCGKT.

The protein belongs to the AAA ATPase family.

It localises to the mitochondrion. This is an uncharacterized protein from Schizosaccharomyces pombe (strain 972 / ATCC 24843) (Fission yeast).